The chain runs to 358 residues: Protein FAM50 homolog (358 aa).

A compositionally biased stretch (basic and acidic residues) spans 104–113 (AKLAEKDRQK). The tract at residues 104-151 (AKLAEKDRQKRQIQALSFDPDDEPDGDDANDGDEGSGKESEKEDVKEE) is disordered. The segment covering 122 to 137 (DPDDEPDGDDANDGDE) has biased composition (acidic residues). Positions 138 to 151 (GSGKESEKEDVKEE) are enriched in basic and acidic residues.

The protein belongs to the FAM50 family.

The chain is Protein FAM50 homolog from Anopheles gambiae (African malaria mosquito).